We begin with the raw amino-acid sequence, 67 residues long: Cysteine-rich venom protein bucarin (67 aa).

The SCP domain occupies 13–58 (VDKHNALRRSVRPTARNMLQMEWNSNAAQNAKRFADRCTFAHSPPH).

Belongs to the CRISP family. Contains 8 disulfide bonds. As to expression, expressed by the venom gland.

It localises to the secreted. Blocks contraction of smooth muscle elicited by high potassium-induced depolarization, but does not block caffeine-stimulated contraction. May target voltage-gated calcium channels on smooth muscle. This Bungarus candidus (Malayan krait) protein is Cysteine-rich venom protein bucarin.